The sequence spans 147 residues: Protegrin-2 (147 aa).

Residues 1-29 (METQRASLCLGRWSLWLLLLALVVPSASA) form the signal peptide. A propeptide spanning residues 30–130 (QALSYREAVL…DITCNEVQGV (101 aa)) is cleaved from the precursor. The tract at residues 61–80 (DQPPKADEDPGTPKPVSFTV) is disordered. 4 disulfides stabilise this stretch: cysteine 85/cysteine 96, cysteine 107/cysteine 124, cysteine 136/cysteine 145, and cysteine 138/cysteine 143. Position 146 is a valine amide (valine 146).

It belongs to the cathelicidin family.

It localises to the secreted. Its function is as follows. Microbicidal activity. Active against E.coli, Listeria monocytogenes and C.albicans, in vitro. This chain is Protegrin-2 (NPG2), found in Sus scrofa (Pig).